We begin with the raw amino-acid sequence, 200 residues long: Histone chaperone asf1b (200 aa).

It belongs to the ASF1 family. Interacts with histone H3 and histone H4.

The protein resides in the nucleus. Functionally, histone chaperone that facilitates histone deposition and histone exchange and removal during nucleosome assembly and disassembly. The polypeptide is Histone chaperone asf1b (asf1b) (Xenopus tropicalis (Western clawed frog)).